The chain runs to 1116 residues: Error-prone DNA polymerase 1 (1116 aa).

It belongs to the DNA polymerase type-C family. DnaE2 subfamily.

It is found in the cytoplasm. It carries out the reaction DNA(n) + a 2'-deoxyribonucleoside 5'-triphosphate = DNA(n+1) + diphosphate. Its function is as follows. DNA polymerase involved in damage-induced mutagenesis and translesion synthesis (TLS). It is not the major replicative DNA polymerase. The protein is Error-prone DNA polymerase 1 of Rhizobium meliloti (strain 1021) (Ensifer meliloti).